A 269-amino-acid chain; its full sequence is MLTPPRTVVRRDGGLYALERALQRRGFRHVAGADEAGRGACAGPLVAAAAVLPEGRRGEIDGLADSKLLTPASRERVYAEVVARALAYAVVVIPAAEVDLRGLHVCNLAAMRRALASLATAPEYVLTDGFGVDGLDVPGLAVWKGDRVAACVAAASVLAKVTRDRIMVELDTTFPGYGFAEHKGYITAEHSAALRERGPCPEHRFSYVNVATVSGRRGAPPRARRPLVVGLDEPMERSGAVEGTVGVALGERPWAAVSVGNDVAMEGGM.

An RNase H type-2 domain is found at 28-222 (RHVAGADEAG…VSGRRGAPPR (195 aa)). Aspartate 34, glutamate 35, and aspartate 128 together coordinate a divalent metal cation.

It belongs to the RNase HII family. Mn(2+) is required as a cofactor. Mg(2+) serves as cofactor.

It localises to the cytoplasm. It catalyses the reaction Endonucleolytic cleavage to 5'-phosphomonoester.. In terms of biological role, endonuclease that specifically degrades the RNA of RNA-DNA hybrids. This chain is Ribonuclease HII, found in Salinispora arenicola (strain CNS-205).